The primary structure comprises 131 residues: D-ribose pyranase (131 aa).

Histidine 20 functions as the Proton donor in the catalytic mechanism. Residues aspartate 28, histidine 98, and 120–122 contribute to the substrate site; that span reads YAN.

It belongs to the RbsD / FucU family. RbsD subfamily. As to quaternary structure, homodecamer.

It localises to the cytoplasm. The enzyme catalyses beta-D-ribopyranose = beta-D-ribofuranose. It participates in carbohydrate metabolism; D-ribose degradation; D-ribose 5-phosphate from beta-D-ribopyranose: step 1/2. Functionally, catalyzes the interconversion of beta-pyran and beta-furan forms of D-ribose. This Bacillus cytotoxicus (strain DSM 22905 / CIP 110041 / 391-98 / NVH 391-98) protein is D-ribose pyranase.